We begin with the raw amino-acid sequence, 286 residues long: Homoserine kinase (286 aa).

78 to 88 (PVAHGLGSSSS) contacts ATP.

Belongs to the GHMP kinase family. Homoserine kinase subfamily.

Its subcellular location is the cytoplasm. It catalyses the reaction L-homoserine + ATP = O-phospho-L-homoserine + ADP + H(+). It participates in amino-acid biosynthesis; L-threonine biosynthesis; L-threonine from L-aspartate: step 4/5. Its function is as follows. Catalyzes the ATP-dependent phosphorylation of L-homoserine to L-homoserine phosphate. This chain is Homoserine kinase, found in Limosilactobacillus fermentum (strain NBRC 3956 / LMG 18251) (Lactobacillus fermentum).